The chain runs to 185 residues: Elongation factor P (185 aa).

Belongs to the elongation factor P family.

It is found in the cytoplasm. Its pathway is protein biosynthesis; polypeptide chain elongation. Its function is as follows. Involved in peptide bond synthesis. Stimulates efficient translation and peptide-bond synthesis on native or reconstituted 70S ribosomes in vitro. Probably functions indirectly by altering the affinity of the ribosome for aminoacyl-tRNA, thus increasing their reactivity as acceptors for peptidyl transferase. In Thermoanaerobacter sp. (strain X514), this protein is Elongation factor P.